Reading from the N-terminus, the 178-residue chain is Endoribonuclease YbeY (178 aa).

Zn(2+) is bound by residues H118, H122, and H128. Residues 156–178 (YQQDRQDERDRRLLDKSRYFDEP) form a disordered region. The segment covering 159-178 (DRQDERDRRLLDKSRYFDEP) has biased composition (basic and acidic residues).

It belongs to the endoribonuclease YbeY family. Zn(2+) serves as cofactor.

The protein resides in the cytoplasm. In terms of biological role, single strand-specific metallo-endoribonuclease involved in late-stage 70S ribosome quality control and in maturation of the 3' terminus of the 16S rRNA. This chain is Endoribonuclease YbeY, found in Mycobacterium marinum (strain ATCC BAA-535 / M).